Reading from the N-terminus, the 181-residue chain is Ribosome-recycling factor (181 aa).

The tract at residues 135–160 is disordered; sequence MDDIKKDKDMPEDDARKAEDQTQKLT.

This sequence belongs to the RRF family.

The protein resides in the cytoplasm. Functionally, responsible for the release of ribosomes from messenger RNA at the termination of protein biosynthesis. May increase the efficiency of translation by recycling ribosomes from one round of translation to another. The protein is Ribosome-recycling factor of Leuconostoc mesenteroides subsp. mesenteroides (strain ATCC 8293 / DSM 20343 / BCRC 11652 / CCM 1803 / JCM 6124 / NCDO 523 / NBRC 100496 / NCIMB 8023 / NCTC 12954 / NRRL B-1118 / 37Y).